The sequence spans 256 residues: MKADPIEILVSNDDGFRAQGIRELAEALRPLGNVTIVAPDGPRSGASAAITSTLPIKLKLRHREEGYTVYSCTGTPVDCVKLAMNTVFKERKPDLLVTGVNHGNNAGICVIYSGTVGAAMEGCVCDVPALAVSLDDHSEICDMSHATAYAVHVSRMILKNGLPQDTMLSMNVPKGKPLGLKPCAVTDGRFVDEYMASEDARGNAVYWMTGRQINKGTIEGDLELMHAGYVTLSPIKLNMTSRRYLPVLEELLKRSV.

Residues aspartate 13, aspartate 14, serine 44, and asparagine 101 each coordinate a divalent metal cation.

It belongs to the SurE nucleotidase family. A divalent metal cation is required as a cofactor.

The protein localises to the cytoplasm. It catalyses the reaction a ribonucleoside 5'-phosphate + H2O = a ribonucleoside + phosphate. In terms of biological role, nucleotidase that shows phosphatase activity on nucleoside 5'-monophosphates. The sequence is that of 5'-nucleotidase SurE from Porphyromonas gingivalis (strain ATCC 33277 / DSM 20709 / CIP 103683 / JCM 12257 / NCTC 11834 / 2561).